We begin with the raw amino-acid sequence, 238 residues long: Large ribosomal subunit protein uL1 (238 aa).

This sequence belongs to the universal ribosomal protein uL1 family. Part of the 50S ribosomal subunit.

Functionally, binds directly to 23S rRNA. The L1 stalk is quite mobile in the ribosome, and is involved in E site tRNA release. Its function is as follows. Protein L1 is also a translational repressor protein, it controls the translation of the L11 operon by binding to its mRNA. The chain is Large ribosomal subunit protein uL1 from Nostoc sp. (strain PCC 7120 / SAG 25.82 / UTEX 2576).